The primary structure comprises 142 residues: Putative arsenate reductase (142 aa).

Belongs to the low molecular weight phosphotyrosine protein phosphatase family.

Its function is as follows. Reduces arsenate [As(V)] to arsenite [As(III)]. This chain is Putative arsenate reductase (arsC), found in Halobacterium salinarum (strain ATCC 700922 / JCM 11081 / NRC-1) (Halobacterium halobium).